The following is a 310-amino-acid chain: Mitochondrial citrate transporter F (310 aa).

Solcar repeat units lie at residues 23-108, 115-207, and 216-303; these read KKVH…LKNH, PPGL…FKRL, and DNMG…HKKL. 6 helical membrane-spanning segments follow: residues 29-49, 85-105, 122-142, 186-206, 222-242, and 275-296; these read FWFG…LDLV, SAAI…YEEL, IGMA…ADVL, NSTR…TFKR, FTAS…VDVI, and AFRG…TFIF.

The protein belongs to the mitochondrial carrier (TC 2.A.29) family.

It localises to the mitochondrion inner membrane. Mitochondrial transporter that does not mediate citrate export from mitochondria to cytoplasm. Its exact function has still to be determined. This Aspergillus niger (strain ATCC 1015 / CBS 113.46 / FGSC A1144 / LSHB Ac4 / NCTC 3858a / NRRL 328 / USDA 3528.7) protein is Mitochondrial citrate transporter F.